The chain runs to 717 residues: UvrABC system protein C (717 aa).

Residues 16–95 enclose the GIY-YIG domain; it reads DSPGVYKFRD…IKEFDPRFNV (80 aa). Residues 208–243 enclose the UVR domain; the sequence is GTYIRRLEKDMMQAAEEMEYERAARLRDDAEALKRA. The tract at residues 467 to 548 is disordered; that stretch reads ERTGEWEEAP…PREDDGRPKR (82 aa). The span at 477-522 shows a compositional bias: low complexity; it reads EAAPGSASVHASATGPAATGQATAGPAAMGQAAAGPVSTGPAATGP.

This sequence belongs to the UvrC family. As to quaternary structure, interacts with UvrB in an incision complex.

Its subcellular location is the cytoplasm. Functionally, the UvrABC repair system catalyzes the recognition and processing of DNA lesions. UvrC both incises the 5' and 3' sides of the lesion. The N-terminal half is responsible for the 3' incision and the C-terminal half is responsible for the 5' incision. The chain is UvrABC system protein C from Streptomyces griseus subsp. griseus (strain JCM 4626 / CBS 651.72 / NBRC 13350 / KCC S-0626 / ISP 5235).